Consider the following 228-residue polypeptide: Ribulose-phosphate 3-epimerase (228 aa).

S11 contacts substrate. A divalent metal cation-binding residues include H36, D38, and H69. D38 serves as the catalytic Proton acceptor. Substrate contacts are provided by residues H69, 145–148 (GFCG), 180–182 (DGG), and 202–203 (AS). D180 is a binding site for a divalent metal cation. The active-site Proton donor is the D180.

This sequence belongs to the ribulose-phosphate 3-epimerase family. A divalent metal cation serves as cofactor.

The catalysed reaction is D-ribulose 5-phosphate = D-xylulose 5-phosphate. It functions in the pathway carbohydrate degradation. Catalyzes the reversible epimerization of D-ribulose 5-phosphate to D-xylulose 5-phosphate. This chain is Ribulose-phosphate 3-epimerase, found in Chlamydia muridarum (strain MoPn / Nigg).